Reading from the N-terminus, the 232-residue chain is Large ribosomal subunit protein uL1 (232 aa).

Belongs to the universal ribosomal protein uL1 family. Part of the 50S ribosomal subunit.

Functionally, binds directly to 23S rRNA. The L1 stalk is quite mobile in the ribosome, and is involved in E site tRNA release. In terms of biological role, protein L1 is also a translational repressor protein, it controls the translation of the L11 operon by binding to its mRNA. This is Large ribosomal subunit protein uL1 from Bartonella bacilliformis (strain ATCC 35685 / KC583 / Herrer 020/F12,63).